Consider the following 642-residue polypeptide: Probable malate:quinone oxidoreductase (642 aa).

The segment at 1-142 (MIVVFRHEST…TTRGDKRKLN (142 aa)) is unknown. Residues 143–642 (MSDSPKNAQK…TQKTLKLEKA (500 aa)) form an MQO domain region.

The protein in the C-terminal section; belongs to the MQO family. The cofactor is FAD.

It carries out the reaction (S)-malate + a quinone = a quinol + oxaloacetate. Its pathway is carbohydrate metabolism; tricarboxylic acid cycle; oxaloacetate from (S)-malate (quinone route): step 1/1. The sequence is that of Probable malate:quinone oxidoreductase (mqo) from Corynebacterium efficiens (strain DSM 44549 / YS-314 / AJ 12310 / JCM 11189 / NBRC 100395).